A 425-amino-acid chain; its full sequence is Serine--tRNA ligase (425 aa).

230–232 (TAE) contributes to the L-serine binding site. Position 261-263 (261-263 (RSE)) interacts with ATP. Position 284 (Glu-284) interacts with L-serine. Position 348 to 351 (348 to 351 (EISS)) interacts with ATP. Ser-384 contributes to the L-serine binding site.

Belongs to the class-II aminoacyl-tRNA synthetase family. Type-1 seryl-tRNA synthetase subfamily. Homodimer. The tRNA molecule binds across the dimer.

It is found in the cytoplasm. It carries out the reaction tRNA(Ser) + L-serine + ATP = L-seryl-tRNA(Ser) + AMP + diphosphate + H(+). The catalysed reaction is tRNA(Sec) + L-serine + ATP = L-seryl-tRNA(Sec) + AMP + diphosphate + H(+). Its pathway is aminoacyl-tRNA biosynthesis; selenocysteinyl-tRNA(Sec) biosynthesis; L-seryl-tRNA(Sec) from L-serine and tRNA(Sec): step 1/1. In terms of biological role, catalyzes the attachment of serine to tRNA(Ser). Is also able to aminoacylate tRNA(Sec) with serine, to form the misacylated tRNA L-seryl-tRNA(Sec), which will be further converted into selenocysteinyl-tRNA(Sec). The chain is Serine--tRNA ligase from Streptococcus pyogenes serotype M6 (strain ATCC BAA-946 / MGAS10394).